The following is a 238-amino-acid chain: Thrombin-like enzyme AhV_TL-I (238 aa).

Residues 1 to 229 (IIGGDECNIN…HLDWIENIIA (229 aa)) form the Peptidase S1 domain. 6 disulfides stabilise this stretch: C7-C141, C28-C44, C76-C236, C120-C190, C152-C169, and C180-C205. H43 (charge relay system) is an active-site residue. N81 carries an N-linked (GlcNAc...) asparagine glycan. Catalysis depends on D88, which acts as the Charge relay system. The active-site Charge relay system is the S184.

It belongs to the peptidase S1 family. Snake venom subfamily. As to quaternary structure, monomer. Post-translationally, N-glycosylated at Asn-81 by a disaccharide composed of two N-acetylglucosamine (NAG). The presence of this N-glycan deforms the enzyme and Removing the carbohydrate moiety increases the esterase activity, but induces a complete loss of contractile response on mouse thoracic aorta. In terms of tissue distribution, expressed by the venom gland.

The protein resides in the secreted. With respect to regulation, inhibited by PMSF, L-cysteine and partially by SBTI and leupeptin. Its function is as follows. Thrombin-like enzyme that shows fibrinogenolytic activity against both the Aalpha (FGA) and Bbeta (FGB) chains of bovine fibrinogen. This enzyme has poor esterolytic activity upon BAEE substrate. It induces mouse thoracic aortic ring contraction with EC(50)=147 nmol/L. It shows vasoconstrictor effects that are independent of the enzymatic activity, but related to the release of calcium ions form the calcium store, potentially through the activation of ryanodine receptors. This Gloydius halys (Chinese water mocassin) protein is Thrombin-like enzyme AhV_TL-I.